The primary structure comprises 94 residues: Large ribosomal subunit protein bL28 (94 aa).

The protein belongs to the bacterial ribosomal protein bL28 family.

In Maricaulis maris (strain MCS10) (Caulobacter maris), this protein is Large ribosomal subunit protein bL28.